The sequence spans 332 residues: Catabolite control protein A (332 aa).

The HTH lacI-type domain maps to 1–57; that stretch reads MNVTIYDVAREASVSMATVSRVVNGNPNVKPSTRKKVLETIERLGYRPNAVARGLAS. Residues 5 to 24 constitute a DNA-binding region (H-T-H motif); the sequence is IYDVAREASVSMATVSRVVN.

Its function is as follows. Global transcriptional regulator of carbon catabolite repression (CCR) and carbon catabolite activation (CCA), which ensures optimal energy usage under diverse conditions. This chain is Catabolite control protein A (ccpA), found in Priestia megaterium (Bacillus megaterium).